The chain runs to 615 residues: Elongation factor 4 (615 aa).

Positions 14–200 constitute a tr-type G domain; that stretch reads SKIRNFCIIA…KVAELIPAPT (187 aa). Residues 26–31 and 147–150 contribute to the GTP site; these read DHGKST and NKID.

This sequence belongs to the TRAFAC class translation factor GTPase superfamily. Classic translation factor GTPase family. LepA subfamily.

It localises to the cell membrane. The catalysed reaction is GTP + H2O = GDP + phosphate + H(+). In terms of biological role, required for accurate and efficient protein synthesis under certain stress conditions. May act as a fidelity factor of the translation reaction, by catalyzing a one-codon backward translocation of tRNAs on improperly translocated ribosomes. Back-translocation proceeds from a post-translocation (POST) complex to a pre-translocation (PRE) complex, thus giving elongation factor G a second chance to translocate the tRNAs correctly. Binds to ribosomes in a GTP-dependent manner. This Corynebacterium aurimucosum (strain ATCC 700975 / DSM 44827 / CIP 107346 / CN-1) (Corynebacterium nigricans) protein is Elongation factor 4.